We begin with the raw amino-acid sequence, 337 residues long: DNA-directed RNA polymerase subunit alpha (337 aa).

The alpha N-terminal domain (alpha-NTD) stretch occupies residues M1–K233. Residues F249–Y337 form an alpha C-terminal domain (alpha-CTD) region.

The protein belongs to the RNA polymerase alpha chain family. As to quaternary structure, homodimer. The RNAP catalytic core consists of 2 alpha, 1 beta, 1 beta' and 1 omega subunit. When a sigma factor is associated with the core the holoenzyme is formed, which can initiate transcription.

It catalyses the reaction RNA(n) + a ribonucleoside 5'-triphosphate = RNA(n+1) + diphosphate. In terms of biological role, DNA-dependent RNA polymerase catalyzes the transcription of DNA into RNA using the four ribonucleoside triphosphates as substrates. This chain is DNA-directed RNA polymerase subunit alpha, found in Bartonella bacilliformis (strain ATCC 35685 / KC583 / Herrer 020/F12,63).